The following is a 638-amino-acid chain: Golgin subfamily A member 8S (638 aa).

The span at 1 to 11 shows a compositional bias: pro residues; that stretch reads MWPQARLPPHP. The tract at residues 1–84 is disordered; the sequence is MWPQARLPPH…GESPTSSATL (84 aa). Polar residues predominate over residues 50–62; that stretch reads TNGSIHETATSGG. 3 coiled-coil regions span residues 105 to 160, 223 to 275, and 318 to 417; these read VSQL…LNTD, LEQS…MSQE, and EAEL…QQKQ. Disordered stretches follow at residues 427 to 453, 510 to 532, and 556 to 575; these read ALPG…PSIP, KDAA…DEAA, and AHNP…ELGA. The span at 434-446 shows a compositional bias: basic and acidic residues; the sequence is GGGHLDSEGEEAP. A compositionally biased stretch (gly residues) spans 514–525; sequence LGGGHHQAGAQG. The segment covering 561 to 574 has biased composition (low complexity); it reads DEPGPGAPAPQELG.

The protein belongs to the GOLGA8 family.

The sequence is that of Golgin subfamily A member 8S from Homo sapiens (Human).